The sequence spans 263 residues: Oxygen-evolving enhancer protein 2-1, chloroplastic (263 aa).

A Phosphoserine modification is found at Ser-153.

This sequence belongs to the PsbP family. As to quaternary structure, interacts with WAK1.

Its subcellular location is the plastid. It localises to the chloroplast thylakoid lumen. Functionally, may be involved in the regulation of photosystem II. This Arabidopsis thaliana (Mouse-ear cress) protein is Oxygen-evolving enhancer protein 2-1, chloroplastic (PSBP1).